The sequence spans 181 residues: Inorganic pyrophosphatase 2 (181 aa).

Residues K30, R44, and Y56 each coordinate substrate. Residues D66, D71, and D103 each coordinate Mg(2+). Substrate is bound at residue Y142.

The protein belongs to the PPase family. In terms of assembly, homohexamer. Requires Mg(2+) as cofactor.

The protein resides in the cytoplasm. It carries out the reaction diphosphate + H2O = 2 phosphate + H(+). Catalyzes the hydrolysis of inorganic pyrophosphate (PPi) forming two phosphate ions. This chain is Inorganic pyrophosphatase 2, found in Pseudomonas syringae pv. tomato (strain ATCC BAA-871 / DC3000).